The chain runs to 166 residues: Protein SprT (166 aa).

Residues Glu-20–Ala-164 form the SprT-like domain. His-78 contacts Zn(2+). Glu-79 is a catalytic residue. Zn(2+) is bound at residue His-82.

It belongs to the SprT family. Zn(2+) serves as cofactor.

It is found in the cytoplasm. This is Protein SprT from Klebsiella pneumoniae subsp. pneumoniae (strain ATCC 700721 / MGH 78578).